Reading from the N-terminus, the 208-residue chain is Ribosome maturation factor RimP (208 aa).

The segment at 165–208 (TAQPKKGQRQGKEPAKESGQKKQLAEAAPRSGSKRSERGSEKRK) is disordered. 2 stretches are compositionally biased toward basic and acidic residues: residues 174-188 (QGKEPAKESGQKKQL) and 198-208 (KRSERGSEKRK).

The protein belongs to the RimP family.

The protein resides in the cytoplasm. Functionally, required for maturation of 30S ribosomal subunits. In Sorangium cellulosum (strain So ce56) (Polyangium cellulosum (strain So ce56)), this protein is Ribosome maturation factor RimP.